Reading from the N-terminus, the 131-residue chain is UPF0146 protein PH0209 (131 aa).

This sequence belongs to the UPF0146 family.

The polypeptide is UPF0146 protein PH0209 (Pyrococcus horikoshii (strain ATCC 700860 / DSM 12428 / JCM 9974 / NBRC 100139 / OT-3)).